Consider the following 127-residue polypeptide: Large ribosomal subunit protein bL17 (127 aa).

The protein belongs to the bacterial ribosomal protein bL17 family. As to quaternary structure, part of the 50S ribosomal subunit. Contacts protein L32.

The chain is Large ribosomal subunit protein bL17 from Lactobacillus gasseri (strain ATCC 33323 / DSM 20243 / BCRC 14619 / CIP 102991 / JCM 1131 / KCTC 3163 / NCIMB 11718 / NCTC 13722 / AM63).